The primary structure comprises 569 residues: Protein GPR108 (569 aa).

A signal peptide spans 1–34 (MAVSERRGLSGESPTQCRWGYLSLLVLTLSGCSG). Residues asparagine 59, asparagine 111, and asparagine 182 are each glycosylated (N-linked (GlcNAc...) asparagine). Positions 144 to 219 (LLPEAPTQSG…DPSGKEKDQV (76 aa)) are disordered. A compositionally biased stretch (polar residues) spans 180 to 192 (KENQTAPQVSGDK). Residues 194–203 (TPGEHRHSSE) are compositionally biased toward basic and acidic residues. Asparagine 226 and asparagine 230 each carry an N-linked (GlcNAc...) asparagine glycan. The next 7 membrane-spanning stretches (helical) occupy residues 289-309 (LYLI…SVLC), 318-338 (IHWL…FHSI), 362-382 (LLKG…WAFV), 393-413 (IFGI…VIES), 427-447 (ILFL…VWSI), 475-495 (VMVI…QVAV), and 499-519 (WQWL…VLTG).

It belongs to the LU7TM family. High expression in spleen, lung, stomach, large and small intestine, and thymus.

It localises to the golgi apparatus. The protein resides in the cis-Golgi network membrane. Its subcellular location is the trans-Golgi network membrane. The protein localises to the golgi apparatus membrane. Its function is as follows. May play a role in intracellular immune modulation by activating NF-kappaB response and attenuating Toll-like-receptor response. Functionally, (Microbial infection) Plays an essential function in adeno-associated virus (AAV) transduction, across multiple serotypes except AAV5. May play a critical role in mediating the endosomal virus escape or in the AAV virions trafficking from endosomes to the nucleus. This chain is Protein GPR108 (Gpr108), found in Mus musculus (Mouse).